Here is a 499-residue protein sequence, read N- to C-terminus: Aspartyl/glutamyl-tRNA(Asn/Gln) amidotransferase subunit B (499 aa).

Belongs to the GatB/GatE family. GatB subfamily. As to quaternary structure, heterotrimer of A, B and C subunits.

The enzyme catalyses L-glutamyl-tRNA(Gln) + L-glutamine + ATP + H2O = L-glutaminyl-tRNA(Gln) + L-glutamate + ADP + phosphate + H(+). It carries out the reaction L-aspartyl-tRNA(Asn) + L-glutamine + ATP + H2O = L-asparaginyl-tRNA(Asn) + L-glutamate + ADP + phosphate + 2 H(+). Its function is as follows. Allows the formation of correctly charged Asn-tRNA(Asn) or Gln-tRNA(Gln) through the transamidation of misacylated Asp-tRNA(Asn) or Glu-tRNA(Gln) in organisms which lack either or both of asparaginyl-tRNA or glutaminyl-tRNA synthetases. The reaction takes place in the presence of glutamine and ATP through an activated phospho-Asp-tRNA(Asn) or phospho-Glu-tRNA(Gln). The sequence is that of Aspartyl/glutamyl-tRNA(Asn/Gln) amidotransferase subunit B from Bartonella quintana (strain Toulouse) (Rochalimaea quintana).